A 550-amino-acid polypeptide reads, in one-letter code: Methyl-accepting chemotaxis protein PcaY (550 aa).

The Cytoplasmic portion of the chain corresponds to 1-19 (MVPTRSTARMLANLKIRTG). A helical transmembrane segment spans residues 20-40 (MFWVLSLFSLTLLFSTASAWW). The Periplasmic portion of the chain corresponds to 41 to 198 (AALGSDQQIT…ESDRRLARAQ (158 aa)). Residues 44 to 196 (GSDQQITELD…MLESDRRLAR (153 aa)) are ligand-binding domain. Residues arginine 71 and asparagine 75 each contribute to the benzoate site. Salicylate-binding residues include arginine 71, asparagine 75, and tyrosine 135. 71 to 78 (RSSANVSS) is a binding site for 3,4-dihydroxybenzoate. Residues 71-78 (RSSANVSS), tyrosine 135, glutamine 142, and asparagine 158 contribute to the L-quinate site. Residue glutamine 169 participates in 3,4-dihydroxybenzoate binding. Residues 199–219 (LLSLCLLGVTVVLAVLCWAFI) traverse the membrane as a helical segment. Topologically, residues 220–550 (AQRVLHPLRE…MTALVGRFKV (331 aa)) are cytoplasmic. The region spanning 221-273 (QRVLHPLREAGGHFRRIASGDLSVPVQGQGNNEIGQLFHELQRMQQSQRDTLG) is the HAMP domain. One can recognise a Methyl-accepting transducer domain in the interval 278–514 (CARQLDAAAT…EVDRNLLNIR (237 aa)).

This sequence belongs to the methyl-accepting chemotaxis (MCP) protein family. Ligand free PcaY_PP-ligand-binding domain (LBD) is present in a monomer-dimer equilibrium. Only the dimeric LBD is able to bind ligands which in turn causes dimer stabilization.

It localises to the cell inner membrane. Its function is as follows. Chemotactic-signal transducers respond to changes in the concentration of attractants and repellents in the environment, transduce a signal from the outside to the inside of the cell, and facilitate sensory adaptation through the variation of the level of methylation. PcaY recognizes a wide range of compounds containing a C6-membered ring with a carboxylate group. Binds preferentially compounds that serve as carbon sources and among them those that rapidly promote growth. Tightest binding compounds are quinate, shikimate, 3-dehydroshikimate and protocatechuate, which are at the interception of the biosynthetic shikimate and catabolic quinate pathways. The sequence is that of Methyl-accepting chemotaxis protein PcaY from Pseudomonas putida (strain ATCC 47054 / DSM 6125 / CFBP 8728 / NCIMB 11950 / KT2440).